A 209-amino-acid polypeptide reads, in one-letter code: Ion-translocating oxidoreductase complex subunit G (209 aa).

The chain crosses the membrane as a helical span at residues 9-29; it reads ATTLALFAASTTAVTAVVNML. Thr-175 bears the FMN phosphoryl threonine mark.

Belongs to the RnfG family. As to quaternary structure, the complex is composed of six subunits: RnfA, RnfB, RnfC, RnfD, RnfE and RnfG. Requires FMN as cofactor.

It is found in the cell inner membrane. Part of a membrane-bound complex that couples electron transfer with translocation of ions across the membrane. This is Ion-translocating oxidoreductase complex subunit G from Pectobacterium atrosepticum (strain SCRI 1043 / ATCC BAA-672) (Erwinia carotovora subsp. atroseptica).